Here is a 633-residue protein sequence, read N- to C-terminus: tRNA uridine 5-carboxymethylaminomethyl modification enzyme MnmG (633 aa).

13-18 (GGGHAG) serves as a coordination point for FAD. 273 to 287 (GPRYCPSIEDKINRF) serves as a coordination point for NAD(+).

This sequence belongs to the MnmG family. In terms of assembly, homodimer. Heterotetramer of two MnmE and two MnmG subunits. Requires FAD as cofactor.

The protein resides in the cytoplasm. NAD-binding protein involved in the addition of a carboxymethylaminomethyl (cmnm) group at the wobble position (U34) of certain tRNAs, forming tRNA-cmnm(5)s(2)U34. The polypeptide is tRNA uridine 5-carboxymethylaminomethyl modification enzyme MnmG (Pseudoalteromonas atlantica (strain T6c / ATCC BAA-1087)).